The following is a 508-amino-acid chain: UDP-N-acetylmuramoyl-L-alanyl-D-glutamate--L-lysine ligase (508 aa).

S47 provides a ligand contact to UDP-N-acetyl-alpha-D-muramoyl-L-alanyl-D-glutamate. 124 to 130 provides a ligand contact to ATP; that stretch reads GTKGKTT. Residues 168-169, S195, and R203 each bind UDP-N-acetyl-alpha-D-muramoyl-L-alanyl-D-glutamate; that span reads TT. Residue K237 is modified to N6-carboxylysine. Positions 425-428 match the L-lysine recognition motif motif; it reads DDPA.

The protein belongs to the MurCDEF family. MurE subfamily. In terms of processing, carboxylation is probably crucial for Mg(2+) binding and, consequently, for the gamma-phosphate positioning of ATP.

Its subcellular location is the cytoplasm. It catalyses the reaction UDP-N-acetyl-alpha-D-muramoyl-L-alanyl-D-glutamate + L-lysine + ATP = UDP-N-acetyl-alpha-D-muramoyl-L-alanyl-gamma-D-glutamyl-L-lysine + ADP + phosphate + H(+). The protein operates within cell wall biogenesis; peptidoglycan biosynthesis. Its function is as follows. Catalyzes the addition of L-lysine to the nucleotide precursor UDP-N-acetylmuramoyl-L-alanyl-D-glutamate (UMAG) in the biosynthesis of bacterial cell-wall peptidoglycan. The sequence is that of UDP-N-acetylmuramoyl-L-alanyl-D-glutamate--L-lysine ligase from Enterococcus faecalis (strain ATCC 700802 / V583).